A 499-amino-acid polypeptide reads, in one-letter code: Salviol synthase (499 aa).

Residues 4–24 form a helical membrane-spanning segment; sequence HIPSLVLCISFFIFFKIVSKL. Cysteine 436 lines the heme pocket.

The protein belongs to the cytochrome P450 family. Heme serves as cofactor. Expressed in leaf glandular trichomes.

The protein resides in the membrane. It carries out the reaction ferruginol + reduced [NADPH--hemoprotein reductase] + O2 = salviol + oxidized [NADPH--hemoprotein reductase] + H2O + H(+). Its pathway is secondary metabolite biosynthesis; terpenoid biosynthesis. Monooxygenase involved in the biosynthesis of labdane-related diterpenes natural products. Catalyzes the oxidation of ferruginol to produce salviol. Salviol is an intermediate in the biosynthesis of carnosate, a potent antioxidant. The protein is Salviol synthase of Salvia pomifera (Apple sage).